Here is a 115-residue protein sequence, read N- to C-terminus: Nitrogen regulatory protein P-II 2 (115 aa).

Tyr-54 is modified (O-UMP-tyrosine).

It belongs to the P(II) protein family.

Could be involved in the regulation of nitrogen fixation. This Methanothermobacter thermautotrophicus (strain ATCC 29096 / DSM 1053 / JCM 10044 / NBRC 100330 / Delta H) (Methanobacterium thermoautotrophicum) protein is Nitrogen regulatory protein P-II 2.